We begin with the raw amino-acid sequence, 278 residues long: HTH-type transcriptional activator RhaS (278 aa).

The HTH araC/xylS-type domain maps to 174-272; it reads NQLMAWLEDH…NWSPRDIRQG (99 aa). 2 consecutive DNA-binding regions (H-T-H motif) follow at residues 191-212 and 239-262; these read EAVA…KQHT and VTEI…RREF.

Binds DNA as a dimer.

The protein localises to the cytoplasm. Functionally, activates expression of the rhaBAD and rhaT operons. The sequence is that of HTH-type transcriptional activator RhaS from Salmonella dublin (strain CT_02021853).